A 417-amino-acid polypeptide reads, in one-letter code: Serine--tRNA ligase (417 aa).

L-serine is bound at residue 226–228 (TSE). ATP-binding positions include 257-259 (RRE) and Val-273. Residue Glu-280 participates in L-serine binding. 344-347 (ELTS) is an ATP binding site. Position 379 (Thr-379) interacts with L-serine.

Belongs to the class-II aminoacyl-tRNA synthetase family. Type-1 seryl-tRNA synthetase subfamily. Homodimer. The tRNA molecule binds across the dimer.

Its subcellular location is the cytoplasm. It carries out the reaction tRNA(Ser) + L-serine + ATP = L-seryl-tRNA(Ser) + AMP + diphosphate + H(+). The catalysed reaction is tRNA(Sec) + L-serine + ATP = L-seryl-tRNA(Sec) + AMP + diphosphate + H(+). It participates in aminoacyl-tRNA biosynthesis; selenocysteinyl-tRNA(Sec) biosynthesis; L-seryl-tRNA(Sec) from L-serine and tRNA(Sec): step 1/1. Functionally, catalyzes the attachment of serine to tRNA(Ser). Is also able to aminoacylate tRNA(Sec) with serine, to form the misacylated tRNA L-seryl-tRNA(Sec), which will be further converted into selenocysteinyl-tRNA(Sec). This is Serine--tRNA ligase from Mycobacterium sp. (strain JLS).